Consider the following 640-residue polypeptide: DNA gyrase subunit B (640 aa).

The region spanning 423–537 is the Toprim domain; the sequence is AELYIVEGDS…NGNIYIAQPP (115 aa). Mg(2+)-binding residues include Glu-429, Asp-502, and Asp-504.

Belongs to the type II topoisomerase GyrB family. Heterotetramer, composed of two GyrA and two GyrB chains. In the heterotetramer, GyrA contains the active site tyrosine that forms a transient covalent intermediate with DNA, while GyrB binds cofactors and catalyzes ATP hydrolysis. Requires Mg(2+) as cofactor. It depends on Mn(2+) as a cofactor. Ca(2+) serves as cofactor.

Its subcellular location is the cytoplasm. It catalyses the reaction ATP-dependent breakage, passage and rejoining of double-stranded DNA.. Functionally, a type II topoisomerase that negatively supercoils closed circular double-stranded (ds) DNA in an ATP-dependent manner to modulate DNA topology and maintain chromosomes in an underwound state. Negative supercoiling favors strand separation, and DNA replication, transcription, recombination and repair, all of which involve strand separation. Also able to catalyze the interconversion of other topological isomers of dsDNA rings, including catenanes and knotted rings. Type II topoisomerases break and join 2 DNA strands simultaneously in an ATP-dependent manner. The sequence is that of DNA gyrase subunit B from Spiroplasma citri.